Consider the following 371-residue polypeptide: Histidinol-phosphate aminotransferase (371 aa).

Lysine 228 bears the N6-(pyridoxal phosphate)lysine mark.

This sequence belongs to the class-II pyridoxal-phosphate-dependent aminotransferase family. Histidinol-phosphate aminotransferase subfamily. Pyridoxal 5'-phosphate is required as a cofactor.

The catalysed reaction is L-histidinol phosphate + 2-oxoglutarate = 3-(imidazol-4-yl)-2-oxopropyl phosphate + L-glutamate. Its pathway is amino-acid biosynthesis; L-histidine biosynthesis; L-histidine from 5-phospho-alpha-D-ribose 1-diphosphate: step 7/9. The protein is Histidinol-phosphate aminotransferase of Methanococcus maripaludis (strain C7 / ATCC BAA-1331).